The sequence spans 402 residues: MGFFRQLFSLSLCALSLAIPSKLIGLENTQDVIPNSYIVVMKSTISEAEFQTHQAWASKIHRRNLGERDGTLGGLDGLKTTFEFEGLKGYSGAFDKRTIELISRNPAVDYVEVDRVVKLDAITTQRNAPSWGLGRISHKSAGSSDFVFDDSAGSGITIYGVDTGIDIKHPEFSGRATWGTNTVDNEDTDQNGHGTHTAGTFAGATYGIAKKANVIAVKVLNAQGTGSTSGVIQGIQWCTDHAGRNGLRGKAAMNLSLGIRGSTVFNRVAEAAQQSGIFLAVAAGNDGTDAAQFSPASARGVCTAAATNSQDAATSWSNYGSVVAVYGPGADIVSAYPNEDTATLSGTSMASPHVCGVGAYLMALEGIGPDKVCDRIKELAVESVTNQKPNTTRKLLYNGSGA.

Residues 1–20 (MGFFRQLFSLSLCALSLAIP) form the signal peptide. Positions 21-120 (SKLIGLENTQ…VEVDRVVKLD (100 aa)) are excised as a propeptide. The region spanning 36–119 (SYIVVMKSTI…YVEVDRVVKL (84 aa)) is the Inhibitor I9 domain. One can recognise a Peptidase S8 domain in the interval 130–402 (SWGLGRISHK…RKLLYNGSGA (273 aa)). Active-site charge relay system residues include D162 and H193. N254 carries N-linked (GlcNAc...) asparagine glycosylation. The active-site Charge relay system is S348. N-linked (GlcNAc...) asparagine glycosylation is found at N390 and N398.

The protein belongs to the peptidase S8 family.

It localises to the secreted. In terms of biological role, secreted subtilisin-like serine protease with keratinolytic activity that contributes to pathogenicity. The protein is Subtilisin-like protease 9 (SUB9) of Arthroderma benhamiae (strain ATCC MYA-4681 / CBS 112371) (Trichophyton mentagrophytes).